Consider the following 578-residue polypeptide: A-type ATP synthase subunit A (578 aa).

Residue 228-235 (GPFGSGKT) coordinates ATP.

This sequence belongs to the ATPase alpha/beta chains family. Has multiple subunits with at least A(3), B(3), C, D, E, F, H, I and proteolipid K(x).

The protein resides in the cell membrane. It catalyses the reaction ATP + H2O + 4 H(+)(in) = ADP + phosphate + 5 H(+)(out). In terms of biological role, produces ATP from ADP in the presence of a proton gradient across the membrane. The archaeal alpha chain is a catalytic subunit. Functionally, component of the A-type ATP synthase that produces ATP from ADP in the presence of a proton gradient across the membrane. The A chain is the catalytic subunit. In Methanosarcina barkeri, this protein is A-type ATP synthase subunit A.